A 1856-amino-acid polypeptide reads, in one-letter code: DNA-directed RNA polymerase II subunit RPB1 (1856 aa).

Positions 66, 69, 76, 79, 106, 109, 149, and 177 each coordinate Zn(2+). Residues 256–268 (PAVVTFGSAKNQD) form a lid loop region. Positions 314-331 (NCIPGLPTATQKGGRPLK) are rudder loop. Positions 489, 491, and 493 each coordinate Mg(2+). Residues 827–839 (PSEFFFHAMGGRE) form a bridging helix region. A Glycyl lysine isopeptide (Lys-Gly) (interchain with G-Cter in ubiquitin) cross-link involves residue K1260. A disordered region spans residues 1523–1856 (PTTGGMSPGA…PSSPTYDPNS (334 aa)). Over residues 1587 to 1856 (SMTSPHYSPT…PSSPTYDPNS (270 aa)) the composition is skewed to low complexity. 27 tandem repeats follow at residues 1593 to 1599 (YSPTSPS), 1600 to 1606 (YSPTSPA), 1616 to 1622 (YSPTSPS), 1623 to 1629 (YSPTSPS), 1630 to 1636 (YSPTSPS), 1637 to 1643 (YSPTSPS), 1644 to 1650 (YSPTSPS), 1651 to 1657 (YSPTSPS), 1658 to 1664 (YSPSSPS), 1665 to 1671 (YSPSSPS), 1672 to 1678 (YSPSSPR), 1679 to 1685 (YSPTSPT), 1686 to 1692 (YSPTSPT), 1693 to 1699 (YSPTSPT), 1700 to 1706 (YSPTSPT), 1707 to 1713 (YSPTSPS), 1720 to 1726 (YSPSSPK), 1727 to 1733 (YSPSSPT), 1734 to 1740 (YSPTSPS), 1741 to 1747 (YSPTSPQ), 1748 to 1754 (YSPTSPQ), 1755 to 1761 (YSPSSPT), 1769 to 1775 (YNPTSPR), 1782 to 1788 (YSPTSPT), 1789 to 1795 (YSPTSPS), 1796 to 1802 (YTPSSPQ), and 1803 to 1809 (YSPTSPT). A C-terminal domain (CTD); 28 X 7 AA approximate tandem repeats of Y-[ST]-P-[ST]-S-P-[AGKNQRST] region spans residues 1593–1816 (YSPTSPSYSP…SPTYTPSPSE (224 aa)). The stretch at 1810–1816 (YTPSPSE) is one 28; approximate repeat.

The protein belongs to the RNA polymerase beta' chain family. In terms of assembly, component of the RNA polymerase II (Pol II) complex consisting of 12 subunits. Interacts with sig-7. The tandem 7 residues repeats in the C-terminal domain (CTD) can be highly phosphorylated. The phosphorylation activates Pol II. Phosphorylation occurs mainly at residues 'Ser-2' and 'Ser-5' of the heptapeptide repeat and starts at the 3- to 4-cell embryonic stage. This phosphorylation also occurs in the early stages of oocyte development and is not detected in oocytes arrested at the meiotic diakinesis stage. In the somatic lineage, phosphorylation at 'Ser-2' is mediated by cdk-12 downstream of cdk-9 whereas in the germline lineage cdk-12 phosphorylates 'Ser-2' independently of cdk-9. Phosphorylation is likely mediated by cdk-7. May be dephosphorylated by fcp-1 in diakinetic oocytes and in 1-cell and 2-cell embryos. Dephosphorylated at 'Ser-5' of the heptapeptide repeats by ssup-72. The phosphorylation state is believed to result from the balanced action of site-specific CTD kinases and phosphatase, and a 'CTD code' that specifies the position of Pol II within the transcription cycle has been proposed. In terms of processing, following transcription stress, the elongating form of RNA polymerase II (RNA pol IIo) is polyubiquitinated via 'Lys-63'-linkages on Lys-1260 at DNA damage sites without leading to degradation: ubiquitination promotes RNA pol IIo backtracking to allow access by the transcription-coupled nucleotide excision repair (TC-NER) machinery. Subsequent DEF1-dependent polyubiquitination by the elongin complex via 'Lys-48'-linkages may lead to proteasome-mediated degradation; presumably at stalled RNA pol II where TC-NER has failed, to halt global transcription and enable 'last resort' DNA repair pathways.

The protein resides in the nucleus. The protein localises to the chromosome. The enzyme catalyses RNA(n) + a ribonucleoside 5'-triphosphate = RNA(n+1) + diphosphate. Its function is as follows. DNA-dependent RNA polymerase catalyzes the transcription of DNA into RNA using the four ribonucleoside triphosphates as substrates. Largest and catalytic component of RNA polymerase II which synthesizes mRNA precursors and many functional non-coding RNAs. Forms the polymerase active center together with the second largest subunit. Pol II is the central component of the basal RNA polymerase II transcription machinery. It is composed of mobile elements that move relative to each other. RPB1 is part of the core element with the central large cleft, the clamp element that moves to open and close the cleft and the jaws that are thought to grab the incoming DNA template. At the start of transcription, a single-stranded DNA template strand of the promoter is positioned within the central active site cleft of Pol II. A bridging helix emanates from RPB1 and crosses the cleft near the catalytic site and is thought to promote translocation of Pol II by acting as a ratchet that moves the RNA-DNA hybrid through the active site by switching from straight to bent conformations at each step of nucleotide addition. During transcription elongation, Pol II moves on the template as the transcript elongates. Elongation is influenced by the phosphorylation status of the C-terminal domain (CTD) of Pol II largest subunit (RPB1), which serves as a platform for assembly of factors that regulate transcription initiation, elongation, termination and mRNA processing. Involved in the transcription of several genes including those involved in embryogenesis. The sequence is that of DNA-directed RNA polymerase II subunit RPB1 from Caenorhabditis elegans.